Reading from the N-terminus, the 104-residue chain is MHGDTINIQDVILDLVPQPEIDLQCYEQLDYEQFDSSEEDETDNVRNQQARQAEQEACYRIEAECCVCNSIVQLAVLSSRQNVRAVEQLLMGDVSLVCHQCATY.

The segment at 1-47 (MHGDTINIQDVILDLVPQPEIDLQCYEQLDYEQFDSSEEDETDNVRN) is E7 terminal domain. An LXCXE motif; interaction with host RB1 and TMEM173/STING motif is present at residues 23–27 (LQCYE). The segment at 65 to 101 (CCVCNSIVQLAVLSSRQNVRAVEQLLMGDVSLVCHQC) is a zinc-finger region. Residues 83-91 (VRAVEQLLM) carry the Nuclear export signal motif.

It belongs to the papillomaviridae E7 protein family. Homodimer. Homooligomer. Interacts with host RB1; this interaction induces dissociation of RB1-E2F1 complex thereby disrupting RB1 activity. Interacts with host EP300; this interaction represses EP300 transcriptional activity. Interacts with protein E2; this interaction inhibits E7 oncogenic activity. Interacts with host TMEM173/STING; this interaction impairs the ability of TMEM173/STING to sense cytosolic DNA and promote the production of type I interferon (IFN-alpha and IFN-beta). Highly phosphorylated.

The protein resides in the host cytoplasm. The protein localises to the host nucleus. Plays a role in viral genome replication by driving entry of quiescent cells into the cell cycle. Stimulation of progression from G1 to S phase allows the virus to efficiently use the cellular DNA replicating machinery to achieve viral genome replication. E7 protein has both transforming and trans-activating activities. Induces the disassembly of the E2F1 transcription factor from RB1, with subsequent transcriptional activation of E2F1-regulated S-phase genes. Interferes with host histone deacetylation mediated by HDAC1 and HDAC2, leading to transcription activation. Also plays a role in the inhibition of both antiviral and antiproliferative functions of host interferon alpha. Interaction with host TMEM173/STING impairs the ability of TMEM173/STING to sense cytosolic DNA and promote the production of type I interferon (IFN-alpha and IFN-beta). The sequence is that of Protein E7 from Homo sapiens (Human).